Reading from the N-terminus, the 381-residue chain is Protein TRIGALACTOSYLDIACYLGLYCEROL 2, chloroplastic (381 aa).

A chloroplast-targeting transit peptide spans 1-45; the sequence is MIGNPVIQVPSSLMPSSSMIACPRVSPNGVPYLPPKPRTRHLVVR. Residues 46 to 96 lie on the Stromal side of the membrane; the sequence is AASNSDAAHGQPSSDGGKNPLTVVLDVPRNIWRQTLKPLSDFGFGKRSIWE. A helical membrane pass occupies residues 97–117; it reads GGVGLFIVSGATLLALSWAWL. Residues 118-381 are Chloroplast intermembrane-facing; it reads RGFQMRSKFR…LLIKSLSRLL (264 aa).

In terms of assembly, homomultimer. Substrate-binding subunit of the TGD complex, a lipid translocator at the inner chloroplast envelope membrane made of TGD1, TGD2 and TGD3. Interacts with TGD1 and TGD3 with an overall subunit stoichiometry of 2 TGD1, 2 TGD3 and 8 to 12 TGD2. Interacts with TGD5.

Its subcellular location is the plastid. The protein localises to the chloroplast inner membrane. Its function is as follows. Component of a phosphatidic acid/lipid transport complex in the chloroplast envelope. Specifically binds phosphatidic acid (PA). Involved in lipid transfer from the endoplasmic reticulum (ER) to plastids, and necessary for thylakoids formation. The sequence is that of Protein TRIGALACTOSYLDIACYLGLYCEROL 2, chloroplastic from Arabidopsis thaliana (Mouse-ear cress).